Consider the following 283-residue polypeptide: Probable aquaporin NIP4-2 (283 aa).

Met-1 carries the N-acetylmethionine modification. Positions 1-21 (MTSHGEEIEDEQISRIEKGNC) are enriched in basic and acidic residues. Residues 1–23 (MTSHGEEIEDEQISRIEKGNCKD) are disordered. Helical transmembrane passes span 51-71 (GTYFIIFSGCGVVVVNVLYGG) and 77-97 (GICVTWGLIVMVMIYSTGHIS). The NPA 1 signature appears at 102-104 (NPA). 3 helical membrane passes run 120–140 (VPLYIGAQLTGSLLASLTLRL), 161–181 (ALVAEIIISFLLMFVISGVAT), and 189–209 (LAGIAVGMTIILNVFVAGPIS). The short motif at 214-216 (NPA) is the NPA 2 element. The chain crosses the membrane as a helical span at residues 231–251 (IWVYIVGPFVGIFAGGFVYNF). Residue Ser-267 is modified to Phosphoserine.

This sequence belongs to the MIP/aquaporin (TC 1.A.8) family. NIP (TC 1.A.8.12) subfamily.

It localises to the membrane. Functionally, aquaporins facilitate the transport of water and small neutral solutes across cell membranes. In Arabidopsis thaliana (Mouse-ear cress), this protein is Probable aquaporin NIP4-2 (NIP4-2).